The following is a 190-amino-acid chain: UPF0200 protein TGAM_0868 (190 aa).

7–14 (GMPGSGKS) provides a ligand contact to ATP.

This sequence belongs to the UPF0200 family.

This Thermococcus gammatolerans (strain DSM 15229 / JCM 11827 / EJ3) protein is UPF0200 protein TGAM_0868.